Here is a 346-residue protein sequence, read N- to C-terminus: UDP-N-acetylenolpyruvoylglucosamine reductase (346 aa).

An FAD-binding PCMH-type domain is found at 17-187 (IESQAYALIE…VAVGFTLKKE (171 aa)). Arg163 is a catalytic residue. Ser233 (proton donor) is an active-site residue. Glu329 is an active-site residue.

It belongs to the MurB family. The cofactor is FAD.

It is found in the cytoplasm. It carries out the reaction UDP-N-acetyl-alpha-D-muramate + NADP(+) = UDP-N-acetyl-3-O-(1-carboxyvinyl)-alpha-D-glucosamine + NADPH + H(+). Its pathway is cell wall biogenesis; peptidoglycan biosynthesis. Cell wall formation. The sequence is that of UDP-N-acetylenolpyruvoylglucosamine reductase from Photobacterium profundum (strain SS9).